A 475-amino-acid chain; its full sequence is UDP-N-acetylmuramate--L-alanine ligase (475 aa).

ATP is bound at residue 114-120; it reads GTHGKTT.

This sequence belongs to the MurCDEF family.

The protein localises to the cytoplasm. The catalysed reaction is UDP-N-acetyl-alpha-D-muramate + L-alanine + ATP = UDP-N-acetyl-alpha-D-muramoyl-L-alanine + ADP + phosphate + H(+). It functions in the pathway cell wall biogenesis; peptidoglycan biosynthesis. Cell wall formation. The sequence is that of UDP-N-acetylmuramate--L-alanine ligase from Bartonella bacilliformis (strain ATCC 35685 / KC583 / Herrer 020/F12,63).